The chain runs to 450 residues: UDP-N-acetylmuramoylalanine--D-glutamate ligase (450 aa).

An ATP-binding site is contributed by 119–125 (GSNGKTT).

It belongs to the MurCDEF family.

It localises to the cytoplasm. It carries out the reaction UDP-N-acetyl-alpha-D-muramoyl-L-alanine + D-glutamate + ATP = UDP-N-acetyl-alpha-D-muramoyl-L-alanyl-D-glutamate + ADP + phosphate + H(+). Its pathway is cell wall biogenesis; peptidoglycan biosynthesis. In terms of biological role, cell wall formation. Catalyzes the addition of glutamate to the nucleotide precursor UDP-N-acetylmuramoyl-L-alanine (UMA). The polypeptide is UDP-N-acetylmuramoylalanine--D-glutamate ligase (Bacillus cereus (strain AH187)).